A 486-amino-acid polypeptide reads, in one-letter code: Pentatricopeptide repeat-containing protein At2g01860 (486 aa).

A disordered region spans residues 111–137; it reads QKPDKPSRVRPLPLPQPHKLRPLGLPT. PPR repeat units lie at residues 290-321, 327-361, 362-396, 397-431, and 432-466; these read DSSV…LKKR, SQQD…NREP, SVVM…NCLL, DLPA…GFSP, and TYDI…GLRL.

The protein belongs to the PPR family. P subfamily.

The sequence is that of Pentatricopeptide repeat-containing protein At2g01860 (EMB975) from Arabidopsis thaliana (Mouse-ear cress).